Consider the following 176-residue polypeptide: MATAGKGSKGKGTGVRFTPEGTQGHPQEGTQGHVHFQEQLHDSAVMVTQDKDGHFLVKVGFLKILHKYEITFQLPPVPNLGKDVCPLPVPNPNLRIISVTSLPEGHNVRCEYTAHKEGVLKEELLLAGHSPTHIKVTVQARVMDRHHGTPMLLDGVRCVGAELEYDSEQSDWHGFD.

The tract at residues 1 to 30 (MATAGKGSKGKGTGVRFTPEGTQGHPQEGT) is disordered. The segment covering 20–30 (EGTQGHPQEGT) has biased composition (polar residues).

This sequence belongs to the ADISSP family.

Its function is as follows. May be involved in thermogenesis and glucose homeostasis. The polypeptide is Adipose-secreted signaling protein (Taeniopygia guttata (Zebra finch)).